The sequence spans 582 residues: MRKFLKVTLASALIGCGVIGTVSSLMVKEAKAVEIITHWVPHEVYGMPGEPDNSGKVFFSGLKAKYMGYPKDAQRSPYPGKYSKFWKTLPAYRYYIPDYMYNRDEVRPSNPIKGTFKLEQCVACHSVMTPGIVRDYNKSAHSKAEPAPTGCDTCHGNNHQKLTMPSSKACGTAECHETQYNEQGQGGIGSHASCSSFAQVECAWSIERPPGDTAGCTFCHTSPEERCSTCHQRHQFDPAVARRSEQCKTCHWGKDHRDWEAYDIGLHGTVYQVNKWDTEQFDFSKKLSDADYVGPTCQYCHMRGGHHNVQRASIVYTSMGMSMADRGAPLWKEKRDRWVSICDDCHSPRFARENLQAMDESVKDASLKYRETFKVAEDLLIDGVLDPMPKDLCPDWSGQHIWSLKIGAYHDGEAYGGTTGESGEFRMSNCTDVERLCFESVGYFQTYIYKGMAHGSWNDATYSDGSFGMDRWLVNVKQNASRARRLAALEKKVGISWQPEQFWKTGEWLDQLTGPYIVKNHPGKTIFDLCPDPGWLDTHHAPAEEVEYIERKLKELGITAGSHSAHHHESGHDPAARSMKEH.

An N-terminal signal peptide occupies residues M1 to A32. C121, C124, H125, H141, C151, C154, H155, H159, C170, C175, H176, H191, C216, C219, H220, C227, C230, H231, H234, C247, C250, H251, H267, C297, C300, H301, H306, C342, C345, H346, H454, and Y462 together coordinate heme c. The disordered stretch occupies residues G561–H582. A compositionally biased stretch (basic and acidic residues) spans H567–H582.

Homotrimer; subunits are linked by two covalent bonds between Tyr-462 of one subunit and heme P460 of an adjacent subunit. May form 24-mer of an octamer of trimers. The cofactor is heme c.

The protein resides in the anammoxosome. It carries out the reaction hydrazine + 4 Fe(III)-[cytochrome c] = N2 + 4 Fe(II)-[cytochrome c] + 4 H(+). Its pathway is nitrogen metabolism. Its activity is regulated as follows. Is strongly and competitively inhibited by NO and hydroxylamine. Functionally, catalyzes the four-electron oxidation of hydrazine to N2. The electrons derived from hydrazine oxidation may be transferred to the quinone pool and exploited to promote the generation of proton-motive force (pmf) across the anammoxosome membrane. Is involved in anaerobic ammonium oxidation (anammox), a biological process in which nitrite is used as the electron acceptor in the conversion of ammonium to dinitrogen gas (N2) and water; this bacterial process has a major role in the Earth's nitrogen cycle and has been estimated to synthesize up to 50% of the dinitrogen gas emitted into our atmosphere from the oceans. Cannot oxidize hydroxylamine to NO. The sequence is that of Hydrazine dehydrogenase from Kuenenia stuttgartiensis.